The chain runs to 268 residues: Zinc import ATP-binding protein ZnuC (268 aa).

The ABC transporter domain occupies 16 to 231; that stretch reads IQLKNINVVF…PTFMRLWGNQ (216 aa). 48–55 provides a ligand contact to ATP; that stretch reads GPNGGGKS.

Belongs to the ABC transporter superfamily. Zinc importer (TC 3.A.1.15.5) family. In terms of assembly, the complex is composed of two ATP-binding proteins (ZnuC), two transmembrane proteins (ZnuB) and a solute-binding protein (ZnuA).

It localises to the cell inner membrane. It catalyses the reaction Zn(2+)(out) + ATP(in) + H2O(in) = Zn(2+)(in) + ADP(in) + phosphate(in) + H(+)(in). In terms of biological role, part of the ABC transporter complex ZnuABC involved in zinc import. Responsible for energy coupling to the transport system. This chain is Zinc import ATP-binding protein ZnuC, found in Haemophilus influenzae (strain ATCC 51907 / DSM 11121 / KW20 / Rd).